Here is a 370-residue protein sequence, read N- to C-terminus: Translocating chain-associated membrane protein 2 (370 aa).

At 1 to 22 the chain is on the cytoplasmic side; it reads MAFRRRTKSYPLFSQEFVIHNH. The chain crosses the membrane as a helical span at residues 23 to 43; that stretch reads ADIGFCLVLCVLIGLMFEVTA. The Extracellular segment spans residues 44 to 75; it reads KTAFLFILPQYNISVPTADSETVHYHYGPKDL. N-linked (GlcNAc...) asparagine glycosylation occurs at Asn55. A helical membrane pass occupies residues 76 to 96; that stretch reads VTILFYIFITIILHAVVQEYI. Over 97 to 119 the chain is Cytoplasmic; that stretch reads LDKISKRLHLSKVKHSKFNESGQ. The region spanning 112–321 is the TLC domain; that stretch reads SKFNESGQLV…HSQLRHWREY (210 aa). A helical transmembrane segment spans residues 120 to 140; sequence LVVFHFTSVIWCFYVVVTEGY. The Extracellular portion of the chain corresponds to 141–159; that stretch reads LTNPRSLWEDYPHVHLPFQ. A helical membrane pass occupies residues 160 to 180; sequence VKFFYLCQLAYWLHALPELYF. Residues 181–191 are Cytoplasmic-facing; the sequence is QKVRKEEIPRQ. The helical transmembrane segment at 192-209 threads the bilayer; that stretch reads LQYICLYLVHIAGAYLLN. The Extracellular portion of the chain corresponds to 210-214; sequence LSRLG. The chain crosses the membrane as a helical span at residues 215 to 235; the sequence is LILLLLQYSTEFLFHTARLFY. The Cytoplasmic segment spans residues 236 to 250; the sequence is FADENNEKLFSAWAA. A helical transmembrane segment spans residues 251–271; that stretch reads VFGVTRLFILTLAVLAIGFGL. The Extracellular segment spans residues 272–287; sequence ARMENQAFDPEKGNFN. Residues 288-308 traverse the membrane as a helical segment; it reads TLFCRLCVLLLVCAAQAWLMW. Over 309–370 the chain is Cytoplasmic; the sequence is RFIHSQLRHW…SPRTKKLKSP (62 aa). Residues 348-370 form a disordered region; sequence YHENGVVKAENGTSPRTKKLKSP.

This sequence belongs to the TRAM family. Interacts with SERCA2B and COL1A1.

The protein localises to the membrane. In terms of biological role, necessary for collagen type I synthesis. May couple the activity of the ER Ca(2+) pump SERCA2B with the activity of the translocon. This coupling may increase the local Ca(2+) concentration at the site of collagen synthesis, and a high Ca(2+) concentration may be necessary for the function of molecular chaperones involved in collagen folding. Required for proper insertion of the first transmembrane helix N-terminus of TM4SF20 into the ER lumen, may act as a ceramide sensor for regulated alternative translocation (RAT). The protein is Translocating chain-associated membrane protein 2 (TRAM2) of Homo sapiens (Human).